Reading from the N-terminus, the 282-residue chain is S-formylglutathione hydrolase (282 aa).

Position 4 is an N6-succinyllysine (lysine 4). Serine 149 acts as the Charge relay system in catalysis. At lysine 200 the chain carries N6-acetyllysine. Catalysis depends on charge relay system residues aspartate 226 and histidine 260.

The protein belongs to the esterase D family. As to quaternary structure, homodimer.

The protein localises to the cytoplasm. The protein resides in the cytoplasmic vesicle. It carries out the reaction S-formylglutathione + H2O = formate + glutathione + H(+). Serine hydrolase involved in the detoxification of formaldehyde. This Rattus norvegicus (Rat) protein is S-formylglutathione hydrolase (Esd).